Reading from the N-terminus, the 390-residue chain is Pyruvate dehydrogenase E1 component subunit alpha, somatic form, mitochondrial (390 aa).

Residues 1–29 (MRKMLAAVSRVLSGASQKPASRVLVASRN) constitute a mitochondrion transit peptide. K63 is subject to N6-acetyllysine; alternate. At K63 the chain carries N6-succinyllysine; alternate. The pyruvate site is built by H92, Y118, R119, A157, G165, V167, D196, G197, A198, N225, and Y227. Residues Y118 and R119 each contribute to the thiamine diphosphate site. Residues G165, V167, D196, G197, A198, and N225 each coordinate thiamine diphosphate. D196 contributes to the Mg(2+) binding site. Mg(2+) is bound by residues N225 and Y227. A Phosphoserine; by PDK1 modification is found at S232. The residue at position 244 (K244) is an N6-acetyllysine; alternate. At K244 the chain carries N6-succinyllysine; alternate. K277 bears the N6-succinyllysine mark. H292 lines the thiamine diphosphate pocket. A Phosphoserine; by PDK1, PDK2, PDK3 and PDK4 modification is found at S293. A Phosphoserine modification is found at S295. Position 300 is a phosphoserine; by PDK1, PDK2, PDK3 and PDK4 (S300). At Y301 the chain carries Phosphotyrosine. Residue K313 is modified to N6-acetyllysine; alternate. Residue K313 is modified to N6-succinyllysine; alternate. K321 and K336 each carry N6-acetyllysine. At K385 the chain carries N6-succinyllysine.

Heterotetramer of two PDHA1 and two PDHB subunits. The heterotetramer interacts with DLAT, and is part of the multimeric pyruvate dehydrogenase complex that contains multiple copies of pyruvate dehydrogenase (E1), dihydrolipoamide acetyltransferase (DLAT, E2) and lipoamide dehydrogenase (DLD, E3). These subunits are bound to an inner core composed of about 48 DLAT and 12 PDHX molecules. Requires thiamine diphosphate as cofactor. Mg(2+) is required as a cofactor. Phosphorylation at Ser-232, Ser-293 and Ser-300 by PDK family kinases inactivates the enzyme; for this phosphorylation at a single site is sufficient. Phosphorylation at Ser-293 interferes with access to active site, and thereby inactivates the enzyme. Dephosphorylation at all three sites, i.e. at Ser-232, Ser-293 and Ser-300, is required for reactivation. Post-translationally, acetylation alters the phosphorylation pattern. Deacetylated by SIRT3.

It is found in the mitochondrion matrix. It catalyses the reaction N(6)-[(R)-lipoyl]-L-lysyl-[protein] + pyruvate + H(+) = N(6)-[(R)-S(8)-acetyldihydrolipoyl]-L-lysyl-[protein] + CO2. Its activity is regulated as follows. Pyruvate dehydrogenase activity is inhibited by phosphorylation of PDHA1; it is reactivated by dephosphorylation. In terms of biological role, the pyruvate dehydrogenase complex catalyzes the overall conversion of pyruvate to acetyl-CoA and CO(2), and thereby links the glycolytic pathway to the tricarboxylic cycle. The polypeptide is Pyruvate dehydrogenase E1 component subunit alpha, somatic form, mitochondrial (PDHA1) (Macaca fascicularis (Crab-eating macaque)).